Here is an 82-residue protein sequence, read N- to C-terminus: DNA-directed RNA polymerase subunit omega (82 aa).

The protein belongs to the RNA polymerase subunit omega family. In cyanobacteria the RNAP catalytic core is composed of 2 alpha, 1 beta, 1 beta', 1 gamma and 1 omega subunit. When a sigma factor is associated with the core the holoenzyme is formed, which can initiate transcription.

It carries out the reaction RNA(n) + a ribonucleoside 5'-triphosphate = RNA(n+1) + diphosphate. Promotes RNA polymerase assembly. Latches the N- and C-terminal regions of the beta' subunit thereby facilitating its interaction with the beta and alpha subunits. The polypeptide is DNA-directed RNA polymerase subunit omega (Synechococcus sp. (strain CC9902)).